We begin with the raw amino-acid sequence, 327 residues long: uncharacterized protein (327 aa).

The tract at residues 129-306 (TPLQNQEATT…DNKKTVTTSS (178 aa)) is disordered. The span at 130-144 (PLQNQEATTSPTIES) shows a compositional bias: polar residues. 2 stretches are compositionally biased toward basic and acidic residues: residues 184 to 196 (KSVE…DRNV) and 233 to 276 (TKDE…EKIV).

This is an uncharacterized protein from Caenorhabditis elegans.